The primary structure comprises 212 residues: Thiamine-phosphate synthase (212 aa).

4-amino-2-methyl-5-(diphosphooxymethyl)pyrimidine is bound by residues 35–39 (QLRDK) and Asn-67. The Mg(2+) site is built by Asp-68 and Asp-87. Ser-106 contributes to the 4-amino-2-methyl-5-(diphosphooxymethyl)pyrimidine binding site. Residue 132-134 (TGS) coordinates 2-[(2R,5Z)-2-carboxy-4-methylthiazol-5(2H)-ylidene]ethyl phosphate. Lys-135 contacts 4-amino-2-methyl-5-(diphosphooxymethyl)pyrimidine. 2-[(2R,5Z)-2-carboxy-4-methylthiazol-5(2H)-ylidene]ethyl phosphate is bound by residues Gly-163 and 183-184 (IS).

It belongs to the thiamine-phosphate synthase family. It depends on Mg(2+) as a cofactor.

It carries out the reaction 2-[(2R,5Z)-2-carboxy-4-methylthiazol-5(2H)-ylidene]ethyl phosphate + 4-amino-2-methyl-5-(diphosphooxymethyl)pyrimidine + 2 H(+) = thiamine phosphate + CO2 + diphosphate. It catalyses the reaction 2-(2-carboxy-4-methylthiazol-5-yl)ethyl phosphate + 4-amino-2-methyl-5-(diphosphooxymethyl)pyrimidine + 2 H(+) = thiamine phosphate + CO2 + diphosphate. The catalysed reaction is 4-methyl-5-(2-phosphooxyethyl)-thiazole + 4-amino-2-methyl-5-(diphosphooxymethyl)pyrimidine + H(+) = thiamine phosphate + diphosphate. Its pathway is cofactor biosynthesis; thiamine diphosphate biosynthesis; thiamine phosphate from 4-amino-2-methyl-5-diphosphomethylpyrimidine and 4-methyl-5-(2-phosphoethyl)-thiazole: step 1/1. Condenses 4-methyl-5-(beta-hydroxyethyl)thiazole monophosphate (THZ-P) and 2-methyl-4-amino-5-hydroxymethyl pyrimidine pyrophosphate (HMP-PP) to form thiamine monophosphate (TMP). In Methanocella arvoryzae (strain DSM 22066 / NBRC 105507 / MRE50), this protein is Thiamine-phosphate synthase.